A 217-amino-acid chain; its full sequence is Aminopyrimidine aminohydrolase (217 aa).

Residue aspartate 44 coordinates substrate. Cysteine 135 serves as the catalytic Nucleophile. Residues tyrosine 139 and tyrosine 165 each contribute to the substrate site. The active-site Proton donor is glutamate 207.

This sequence belongs to the TenA family. Homotetramer.

The enzyme catalyses 4-amino-5-aminomethyl-2-methylpyrimidine + H2O = 4-amino-5-hydroxymethyl-2-methylpyrimidine + NH4(+). Its pathway is cofactor biosynthesis; thiamine diphosphate biosynthesis. In terms of biological role, catalyzes an amino-pyrimidine hydrolysis reaction at the C5' of the pyrimidine moiety of thiamine compounds to give a hydroxymethylpyrimidine (HMP). Displays low activity on 4-amino-5-aminomethyl-2-methylpyrimidine as substrate, indicating that the enzyme may act on a different HMP precursor that may derive from the human stomach food assumption or processing. Is probably involved in thiamine biosynthesis. Does not display thiaminase II activity, as it is unable to hydrolyze thiamine. The chain is Aminopyrimidine aminohydrolase from Helicobacter pylori (Campylobacter pylori).